We begin with the raw amino-acid sequence, 20 residues long: Putative beta-neurotoxin (20 aa).

In terms of domain architecture, LCN-type CS-alpha/beta spans 1–20; the sequence is KDGYLVGSDGCKYSCLTRPG.

In terms of tissue distribution, expressed by the venom gland.

The protein localises to the secreted. Beta toxins bind voltage-independently at site-4 of sodium channels (Nav) and shift the voltage of activation toward more negative potentials thereby affecting sodium channel activation and promoting spontaneous and repetitive firing. This Tityus pachyurus (Colombian scorpion) protein is Putative beta-neurotoxin.